The chain runs to 401 residues: Phosphoglycerate kinase, cytosolic (401 aa).

(2R)-3-phosphoglycerate is bound by residues A24, D25, N27, R41, S63, H64, G66, R67, R122, H154, and R155. ADP is bound at residue G200. Residue G200 participates in CDP binding. K202 and K206 together coordinate AMP. K206 serves as a coordination point for ATP. Residue G224 coordinates ADP. Residue G224 coordinates CDP. The AMP site is built by G225 and G297. Residues G225 and G297 each coordinate ATP. Positions 322 and 327 each coordinate CDP. F327 contributes to the ADP binding site. E328 lines the AMP pocket. Residues E328, D359, and S360 each coordinate ATP. D359 lines the Mg(2+) pocket.

Belongs to the phosphoglycerate kinase family. As to quaternary structure, monomer. Mg(2+) is required as a cofactor.

Its subcellular location is the cytoplasm. It catalyses the reaction (2R)-3-phosphoglycerate + ATP = (2R)-3-phospho-glyceroyl phosphate + ADP. It functions in the pathway carbohydrate degradation; glycolysis; pyruvate from D-glyceraldehyde 3-phosphate: step 2/5. This chain is Phosphoglycerate kinase, cytosolic, found in Triticum aestivum (Wheat).